Reading from the N-terminus, the 619-residue chain is 1-deoxy-D-xylulose-5-phosphate synthase (619 aa).

Thiamine diphosphate-binding positions include His74 and 115–117 (GHS). Asp146 contributes to the Mg(2+) binding site. Thiamine diphosphate-binding positions include 147 to 148 (GA), Asn175, Tyr285, and Glu365. Asn175 contributes to the Mg(2+) binding site.

This sequence belongs to the transketolase family. DXPS subfamily. As to quaternary structure, homodimer. Mg(2+) is required as a cofactor. Thiamine diphosphate serves as cofactor.

The enzyme catalyses D-glyceraldehyde 3-phosphate + pyruvate + H(+) = 1-deoxy-D-xylulose 5-phosphate + CO2. It participates in metabolic intermediate biosynthesis; 1-deoxy-D-xylulose 5-phosphate biosynthesis; 1-deoxy-D-xylulose 5-phosphate from D-glyceraldehyde 3-phosphate and pyruvate: step 1/1. Functionally, catalyzes the acyloin condensation reaction between C atoms 2 and 3 of pyruvate and glyceraldehyde 3-phosphate to yield 1-deoxy-D-xylulose-5-phosphate (DXP). In Clostridium perfringens (strain ATCC 13124 / DSM 756 / JCM 1290 / NCIMB 6125 / NCTC 8237 / Type A), this protein is 1-deoxy-D-xylulose-5-phosphate synthase.